The sequence spans 310 residues: Vomeronasal type-1 receptor 3 (310 aa).

At 1-5 the chain is on the extracellular side; that stretch reads MASKD. A helical transmembrane segment spans residues 6–26; it reads FAIGMILSQIMVGFLGNFFLL. Topologically, residues 27-50 are cytoplasmic; that stretch reads YHYSFLHFTRGMLQSTDLTLKHLT. Residues 51 to 71 form a helical membrane-spanning segment; sequence IANSLVILSKGIPQTMAAFGL. The Extracellular segment spans residues 72–91; it reads KDSLSDIGCKFVFYVHRVGR. A helical membrane pass occupies residues 92-112; that stretch reads AVCTGNACLLSVFQVITISSS. The Cytoplasmic segment spans residues 113–129; sequence EFRWAELKLHAHKYIRS. The helical transmembrane segment at 130–150 threads the bilayer; it reads FILVLCWILNTLVNITVPLHV. Over 151–186 the chain is Extracellular; the sequence is TGKWNSINSTKTNDYGYCSGGSRSRIPHSLHIVLLS. A glycan (N-linked (GlcNAc...) asparagine) is linked at N158. The chain crosses the membrane as a helical span at residues 187 to 207; the sequence is SLDVLCLGLMTLASGSMVFIL. The Cytoplasmic segment spans residues 208-235; the sequence is HRLKQQVQHIHGTNLSPRSSPESRVTQS. A helical membrane pass occupies residues 236–258; the sequence is ILVLVSTLCYFTRSPPSLHMSLF. Residues 259 to 263 are Extracellular-facing; the sequence is PNPSW. The helical transmembrane segment at 264–284 threads the bilayer; the sequence is WPLNASALITACFPTVSPFVL. Residues 285 to 310 lie on the Cytoplasmic side of the membrane; the sequence is MSRHPRIPRLGSACCGRNPQFPKLVR.

The protein belongs to the G-protein coupled receptor 1 family.

Its subcellular location is the cell membrane. In terms of biological role, putative pheromone receptor. The protein is Vomeronasal type-1 receptor 3 (VN1R3) of Pan troglodytes (Chimpanzee).